Consider the following 385-residue polypeptide: 4-hydroxy-3-methylbut-2-en-1-yl diphosphate synthase (flavodoxin) 2 (385 aa).

Cys-280, Cys-283, Cys-315, and Glu-322 together coordinate [4Fe-4S] cluster.

It belongs to the IspG family. The cofactor is [4Fe-4S] cluster.

It carries out the reaction (2E)-4-hydroxy-3-methylbut-2-enyl diphosphate + oxidized [flavodoxin] + H2O + 2 H(+) = 2-C-methyl-D-erythritol 2,4-cyclic diphosphate + reduced [flavodoxin]. The protein operates within isoprenoid biosynthesis; isopentenyl diphosphate biosynthesis via DXP pathway; isopentenyl diphosphate from 1-deoxy-D-xylulose 5-phosphate: step 5/6. Converts 2C-methyl-D-erythritol 2,4-cyclodiphosphate (ME-2,4cPP) into 1-hydroxy-2-methyl-2-(E)-butenyl 4-diphosphate. The protein is 4-hydroxy-3-methylbut-2-en-1-yl diphosphate synthase (flavodoxin) 2 of Streptomyces coelicolor (strain ATCC BAA-471 / A3(2) / M145).